The following is an 831-amino-acid chain: Cadherin-related family member 3 (831 aa).

Positions 1 to 19 (MQGAVIVLVLFGITSGGEA) are cleaved as a signal peptide. At 20–711 (LHLLHLPATS…VYSTSAWYVP (692 aa)) the chain is on the extracellular side. Cadherin domains are found at residues 24–132 (HLPA…PPQF), 136–236 (LAQG…TPRF), 237–344 (TSPR…NPAT), 346–466 (RKLT…RPSY), 462–570 (ERPS…TPNF), and 567–693 (TPNF…RPRI). N47, N186, and N257 each carry an N-linked (GlcNAc...) asparagine glycan. The helical transmembrane segment at 712–732 (FIVTLGSILLLGLLGSLMVLL) threads the bilayer. The Cytoplasmic portion of the chain corresponds to 733–831 (SKAVYRHCSS…EAPVPKHTGR (99 aa)). 2 disordered regions span residues 743-763 (TTRRDRKPLTKKRDTKRMNRE) and 798-831 (RWKGPLTQLPNWPEPSTQHRGTAGEAPVPKHTGR). Positions 749 to 763 (KPLTKKRDTKRMNRE) are enriched in basic and acidic residues. Over residues 805-817 (QLPNWPEPSTQHR) the composition is skewed to polar residues.

The protein localises to the cell membrane. Functionally, cadherins are calcium-dependent cell adhesion proteins. They preferentially interact with themselves in a homophilic manner in connecting cells; cadherins may thus contribute to the sorting of heterogeneous cell types. The chain is Cadherin-related family member 3 (Cdhr3) from Mus musculus (Mouse).